The chain runs to 261 residues: UPF0246 protein Daci_5283 (261 aa).

It belongs to the UPF0246 family.

This chain is UPF0246 protein Daci_5283, found in Delftia acidovorans (strain DSM 14801 / SPH-1).